A 457-amino-acid polypeptide reads, in one-letter code: Cysteine--tRNA ligase (457 aa).

C30 provides a ligand contact to Zn(2+). Residues 32 to 42 (PTVYDRAHLGN) carry the 'HIGH' region motif. Zn(2+)-binding residues include C213, H238, and E242. The short motif at 271–275 (KMSKS) is the 'KMSKS' region element. K274 lines the ATP pocket.

It belongs to the class-I aminoacyl-tRNA synthetase family. In terms of assembly, monomer. The cofactor is Zn(2+).

It localises to the cytoplasm. The catalysed reaction is tRNA(Cys) + L-cysteine + ATP = L-cysteinyl-tRNA(Cys) + AMP + diphosphate. The protein is Cysteine--tRNA ligase of Ruegeria sp. (strain TM1040) (Silicibacter sp.).